A 562-amino-acid polypeptide reads, in one-letter code: Urocanate hydratase (562 aa).

NAD(+) contacts are provided by residues 52–53, glutamine 130, 176–178, glutamate 196, arginine 201, 242–243, 263–267, 273–274, and tyrosine 322; these read GG, GMG, NA, QTSAH, and YL. Cysteine 410 is an active-site residue. Glycine 492 serves as a coordination point for NAD(+).

Belongs to the urocanase family. NAD(+) is required as a cofactor.

It is found in the cytoplasm. The enzyme catalyses 4-imidazolone-5-propanoate = trans-urocanate + H2O. It participates in amino-acid degradation; L-histidine degradation into L-glutamate; N-formimidoyl-L-glutamate from L-histidine: step 2/3. Catalyzes the conversion of urocanate to 4-imidazolone-5-propionate. The sequence is that of Urocanate hydratase from Klebsiella pneumoniae (strain 342).